Here is a 682-residue protein sequence, read N- to C-terminus: Protein PilJ (682 aa).

Topologically, residues 1–14 (MKKINAGNLFAGMR) are cytoplasmic. Residues 15-38 (SSSVIAGLFIVLIVSIVLLFANFA) traverse the membrane as a helical segment. The Periplasmic segment spans residues 39–306 (YLNTQSNHDK…DGFENLAGGR (268 aa)). Residues 307–333 (SINLFAGYALGALALASIILIGLVMVR) form a helical membrane-spanning segment. Residues 334 to 682 (ETNRRLAETA…FKLPEGVEQA (349 aa)) lie on the Cytoplasmic side of the membrane. The 52-residue stretch at 347–398 (DRNQAAILRLLDEIADLADGDLTVAATVTEDFTGAIADSINYSIDQLRELVE) folds into the HAMP domain. One can recognise a Methyl-accepting transducer domain in the interval 403–639 (TAVQVAAAAQ…HISNTMNVIQ (237 aa)).

It belongs to the methyl-accepting chemotaxis (MCP) protein family.

The protein resides in the cell inner membrane. Functionally, may be a part of a signal-transduction system that regulates twitching motility by controlling pilus function (extension and retraction). This chain is Protein PilJ (pilJ), found in Pseudomonas aeruginosa (strain ATCC 15692 / DSM 22644 / CIP 104116 / JCM 14847 / LMG 12228 / 1C / PRS 101 / PAO1).